The sequence spans 425 residues: [Pyruvate dehydrogenase (acetyl-transferring)] kinase, mitochondrial (425 aa).

Histidine 178 bears the Phosphohistidine; by autocatalysis mark. One can recognise a Histidine kinase domain in the interval 180–418 (NVAVEIALDI…DVYIHLNRLC (239 aa)). ATP contacts are provided by residues 296 to 303 (EILKNSLR), aspartate 336, 355 to 356 (TT), and 379 to 384 (GFGFGL).

Belongs to the PDK/BCKDK protein kinase family.

It is found in the mitochondrion matrix. The enzyme catalyses L-seryl-[pyruvate dehydrogenase E1 alpha subunit] + ATP = O-phospho-L-seryl-[pyruvate dehydrogenase E1 alpha subunit] + ADP + H(+). Inhibits the mitochondrial pyruvate dehydrogenase complex by phosphorylation of the E1 alpha subunit, thus contributing to the regulation of glucose metabolism. The protein is [Pyruvate dehydrogenase (acetyl-transferring)] kinase, mitochondrial (pkp1) of Schizosaccharomyces pombe (strain 972 / ATCC 24843) (Fission yeast).